Consider the following 305-residue polypeptide: MQRPDMSVAVAGIKMRNPVMTASGTFGYGAEFADYLDLECIGAMISKGLSLKPKAGNPTPRIVETPGGMLNAIGLQNVGIDAFIEQKLPYLKNVNTPVIVNLYGNTLEEYGEVAARLDGLSGVAGIEVNISCPNVKQGGIVFGTDPGAAQEVVRLVKKNTTKPMIVKLSPNVTDVVLMAKACADAGADALSLINTLTGMAIDLERRRPVLANVTGGLSGPAIKPVALRMVWQVAKAVKLPLIGIGGIMNGRDALEFMLAGATAVQVGTASFLDPSAAQRIAREMEQYLVDHKIESVSSLIGALEL.

Residues Ser-23 and 47–48 each bind FMN; that span reads KG. Substrate-binding positions include Lys-47 and 71–75; that span reads NAIGL. Asn-101 and Asn-129 together coordinate FMN. Asn-129 contributes to the substrate binding site. Cys-132 serves as the catalytic Nucleophile. FMN is bound by residues Lys-167 and Ile-193. Substrate is bound at residue 194 to 195; that stretch reads NT. Residues Gly-219, 245–246, and 267–268 contribute to the FMN site; these read GG and GT.

Belongs to the dihydroorotate dehydrogenase family. Type 1 subfamily. As to quaternary structure, heterotetramer of 2 PyrK and 2 PyrD type B subunits. FMN is required as a cofactor.

The protein resides in the cytoplasm. The catalysed reaction is (S)-dihydroorotate + NAD(+) = orotate + NADH + H(+). The protein operates within pyrimidine metabolism; UMP biosynthesis via de novo pathway; orotate from (S)-dihydroorotate (NAD(+) route): step 1/1. Functionally, catalyzes the conversion of dihydroorotate to orotate with NAD(+) as electron acceptor. The protein is Dihydroorotate dehydrogenase B (NAD(+)), catalytic subunit (pyrD) of Citrifermentans bemidjiense (strain ATCC BAA-1014 / DSM 16622 / JCM 12645 / Bem) (Geobacter bemidjiensis).